A 315-amino-acid polypeptide reads, in one-letter code: MPNLKSIRDRIQSVKNTKKITEAMRLVAAARVRRAQEQVIATRPFADRLAQVLYGLQTRLRFEDVDLPLLKKREVKSVGLLVISGDRGLCGGYNTNVIRRAENRAKELKKEGLDYTFVIVGRKAEQYFRRREQPIDASYTGLEQIPTAEEANKIADELLSLFLSEKVDRIELVYTRFVSLVSSRPVIQTLLPLDTQGLEAADDEIFRLTTRGGQFEVERQTVTTQARPLPRDMIFEQDPVQILDSLLPLYLSNQLLRALQESAASELAARMTAMSNASDNAGELIKSLSLSYNKARQAAITQELLEVVGGAEALT.

This sequence belongs to the ATPase gamma chain family. In terms of assembly, F-type ATPases have 2 components, CF(1) - the catalytic core - and CF(0) - the membrane proton channel. CF(1) has five subunits: alpha(3), beta(3), gamma(1), delta(1), epsilon(1). CF(0) has three main subunits: a, b and c.

It localises to the cellular thylakoid membrane. In terms of biological role, produces ATP from ADP in the presence of a proton gradient across the membrane. The gamma chain is believed to be important in regulating ATPase activity and the flow of protons through the CF(0) complex. The polypeptide is ATP synthase gamma chain (Trichormus variabilis (strain ATCC 29413 / PCC 7937) (Anabaena variabilis)).